Here is a 201-residue protein sequence, read N- to C-terminus: Alpha-1-acid glycoprotein 2 (201 aa).

The signal sequence occupies residues 1–18 (MALSWVLTVLSLLPLLEA). Gln19 is subject to Pyrrolidone carboxylic acid. Disulfide bonds link Cys23–Cys165 and Cys90–Cys183. A glycan (N-linked (GlcNAc...) (complex) asparagine) is linked at Asn33. N-linked (GlcNAc...) asparagine glycosylation is found at Asn56, Asn72, Asn93, and Asn103.

Belongs to the calycin superfamily. Lipocalin family. In terms of processing, N-glycosylated. N-glycan heterogeneity at Asn-33: Hex5HexNAc4 (minor), Hex6HexNAc5 (major) and dHex1Hex6HexNAc5 (minor). In terms of tissue distribution, expressed by the liver and secreted in plasma.

The protein resides in the secreted. Functionally, functions as a transport protein in the blood stream. Binds various hydrophobic ligands in the interior of its beta-barrel domain. Also binds synthetic drugs and influences their distribution and availability. Appears to function in modulating the activity of the immune system during the acute-phase reaction. This is Alpha-1-acid glycoprotein 2 (ORM2) from Homo sapiens (Human).